The following is a 919-amino-acid chain: Transcriptional regulatory protein EDS1 (919 aa).

A disordered region spans residues 1 to 54 (MSHHVPNLYGTPIRDPHEHKRNSASMGEVNQSVSSRNCERGSEKGTKQRKKASR). A compositionally biased stretch (polar residues) spans 23-36 (SASMGEVNQSVSSR). Residues 37–46 (NCERGSEKGT) are compositionally biased toward basic and acidic residues. Positions 56–85 (CDQCRRKRIKCRFDKHTGVCQGCLEVGEKC) form a DNA-binding region, zn(2)-C6 fungal-type. A disordered region spans residues 297 to 338 (AGCPNKKLGTDGRSDKWDKNSTWKPVYRSSNPSHPSTEKNVS). The span at 304-317 (LGTDGRSDKWDKNS) shows a compositional bias: basic and acidic residues. The segment covering 318 to 338 (TWKPVYRSSNPSHPSTEKNVS) has biased composition (polar residues).

As to quaternary structure, binds DNA in a sequence-specific manner.

The protein resides in the nucleus. The protein is Transcriptional regulatory protein EDS1 (EDS1) of Saccharomyces cerevisiae (strain Lalvin EC1118 / Prise de mousse) (Baker's yeast).